Here is a 421-residue protein sequence, read N- to C-terminus: SH2 domain-containing protein 4A (421 aa).

Ser117 and Ser123 each carry phosphoserine. The disordered stretch occupies residues 132-271 (DLQAMKKTEP…FLQPLGIPPK (140 aa)). Basic and acidic residues-rich tracts occupy residues 163 to 201 (TRKD…KEDS) and 211 to 230 (KAAD…DYKR). Phosphoserine is present on Ser232. Positions 315–407 (WFHGILTLKK…LGKELLLYPC (93 aa)) constitute an SH2 domain.

Interacts with ESR1. As to expression, in the kidney, expressed only in the glomerulus. Expressed in T-cells, B-cells, macrophages and dendritic cells (at protein level). In adult, highest levels are found in muscle and lung with lower levels in kidney.

Its subcellular location is the cytoplasm. Inhibits estrogen-induced cell proliferation by competing with PLCG for binding to ESR1, blocking the effect of estrogen on PLCG and repressing estrogen-induced proliferation. May play a role in T-cell development and function. The polypeptide is SH2 domain-containing protein 4A (Sh2d4a) (Mus musculus (Mouse)).